We begin with the raw amino-acid sequence, 337 residues long: Tetraacyldisaccharide 4'-kinase (337 aa).

72–79 provides a ligand contact to ATP; that stretch reads TVGGSGKT.

The protein belongs to the LpxK family.

The catalysed reaction is a lipid A disaccharide + ATP = a lipid IVA + ADP + H(+). Its pathway is glycolipid biosynthesis; lipid IV(A) biosynthesis; lipid IV(A) from (3R)-3-hydroxytetradecanoyl-[acyl-carrier-protein] and UDP-N-acetyl-alpha-D-glucosamine: step 6/6. Functionally, transfers the gamma-phosphate of ATP to the 4'-position of a tetraacyldisaccharide 1-phosphate intermediate (termed DS-1-P) to form tetraacyldisaccharide 1,4'-bis-phosphate (lipid IVA). This Shewanella sediminis (strain HAW-EB3) protein is Tetraacyldisaccharide 4'-kinase.